Consider the following 360-residue polypeptide: Chorismate synthase (360 aa).

R46 provides a ligand contact to NADP(+). FMN is bound by residues 123-125 (RSS), 235-236 (NA), G275, 290-294 (KPTPS), and R316.

The protein belongs to the chorismate synthase family. As to quaternary structure, homotetramer. Requires FMNH2 as cofactor.

It catalyses the reaction 5-O-(1-carboxyvinyl)-3-phosphoshikimate = chorismate + phosphate. The protein operates within metabolic intermediate biosynthesis; chorismate biosynthesis; chorismate from D-erythrose 4-phosphate and phosphoenolpyruvate: step 7/7. Its function is as follows. Catalyzes the anti-1,4-elimination of the C-3 phosphate and the C-6 proR hydrogen from 5-enolpyruvylshikimate-3-phosphate (EPSP) to yield chorismate, which is the branch point compound that serves as the starting substrate for the three terminal pathways of aromatic amino acid biosynthesis. This reaction introduces a second double bond into the aromatic ring system. The polypeptide is Chorismate synthase (Wolinella succinogenes (strain ATCC 29543 / DSM 1740 / CCUG 13145 / JCM 31913 / LMG 7466 / NCTC 11488 / FDC 602W) (Vibrio succinogenes)).